The chain runs to 156 residues: Transcription antitermination protein NusB (156 aa).

The protein belongs to the NusB family.

Involved in transcription antitermination. Required for transcription of ribosomal RNA (rRNA) genes. Binds specifically to the boxA antiterminator sequence of the ribosomal RNA (rrn) operons. In Rickettsia felis (strain ATCC VR-1525 / URRWXCal2) (Rickettsia azadi), this protein is Transcription antitermination protein NusB.